We begin with the raw amino-acid sequence, 35 residues long: MEALVYTFLLVGTLGIIFFAIFFREPPKVPSKGKK.

The helical transmembrane segment at 3-23 threads the bilayer; it reads ALVYTFLLVGTLGIIFFAIFF.

Belongs to the PsbT family. PSII is composed of 1 copy each of membrane proteins PsbA, PsbB, PsbC, PsbD, PsbE, PsbF, PsbH, PsbI, PsbJ, PsbK, PsbL, PsbM, PsbT, PsbY, PsbZ, Psb30/Ycf12, at least 3 peripheral proteins of the oxygen-evolving complex and a large number of cofactors. It forms dimeric complexes.

It is found in the plastid. It localises to the chloroplast thylakoid membrane. Functionally, found at the monomer-monomer interface of the photosystem II (PS II) dimer, plays a role in assembly and dimerization of PSII. PSII is a light-driven water plastoquinone oxidoreductase, using light energy to abstract electrons from H(2)O, generating a proton gradient subsequently used for ATP formation. The sequence is that of Photosystem II reaction center protein T from Marchantia polymorpha (Common liverwort).